The sequence spans 332 residues: MSQNDPKIDVKALGKVAVLMGGTSAEREVSLMSGGGVLQALRSRGVDAHAFDPAHSDLSELKAHGYSRCFIALHGRHGEDGTVQGALELLGIPYTGPGVMASSIAMDKIMTKRIWRADGLPTPDWRLVSSSAETAQAFQELGAPMIVKPSREGSTIGLTKVTSLGQCEQAYRLAAQHDPEVLCEQFIDGDETTCPILGQGAEARALPVIRIEAPQGNYDYQNKYFTDVTQYHCPSGLPEAEEREIQRIVVQAYRTLGCRGWARADIMIRASDRKPFLLEINTSPGMTGHSLVPMSANASGISYPDLCLRILASASLDALQGRAGAAGGREPV.

Residues 112–312 (KRIWRADGLP…YPDLCLRILA (201 aa)) enclose the ATP-grasp domain. An ATP-binding site is contributed by 138 to 193 (FQELGAPMIVKPSREGSTIGLTKVTSLGQCEQAYRLAAQHDPEVLCEQFIDGDETT). Mg(2+) is bound by residues D265, E279, and N281.

Belongs to the D-alanine--D-alanine ligase family. Mg(2+) is required as a cofactor. Mn(2+) serves as cofactor.

Its subcellular location is the cytoplasm. It carries out the reaction 2 D-alanine + ATP = D-alanyl-D-alanine + ADP + phosphate + H(+). It participates in cell wall biogenesis; peptidoglycan biosynthesis. Its function is as follows. Cell wall formation. This is D-alanine--D-alanine ligase from Acidovorax ebreus (strain TPSY) (Diaphorobacter sp. (strain TPSY)).